A 71-amino-acid polypeptide reads, in one-letter code: R-phycoerythrin gamma-1 chain, chloroplastic (71 aa).

The phycourobilin site is built by Cys-25 and Cys-34. Residue Cys-49 coordinates (2R,3E)-phycoerythrobilin. Cys-58 contributes to the phycourobilin binding site.

In terms of assembly, heteromer of 6 alpha, 6 beta and 1 gamma chains. Contains four covalently linked bilin chromophores.

It localises to the plastid. Its subcellular location is the chloroplast thylakoid membrane. Its function is as follows. Critical for the incorporation of phycoerythrin in the phycobilisome complex. The chain is R-phycoerythrin gamma-1 chain, chloroplastic from Gastroclonium coulteri (Red alga).